The sequence spans 163 residues: Protein GOLVEN 3 (163 aa).

The signal sequence occupies residues 1–20 (MMRFTIIVIAFLLIIQSLEE). Residues 21 to 141 (EHILVYAHEG…MEKLARLLRD (121 aa)) constitute a propeptide that is removed on maturation. Position 143 is a sulfotyrosine (tyrosine 143). Positions 144–163 (PIYSKPRRKPPVNNRAPDKF) are disordered. Residue proline 154 is modified to Hydroxyproline. Positions 158-163 (RAPDKF) are excised as a propeptide.

Belongs to the RGF family. In terms of assembly, binds to LRR receptor-like serine/threonine-protein kinases RGI1, RGI2 and RGI3 to trigger their dimerization with SERK proteins and subsequent signaling. As to expression, expressed in roots, specifically in the root apical meristem (RAM).

It is found in the secreted. Its function is as follows. Signaling peptide (root growth factor) required during root gravitropism in a PIN2-traffic dependent manner, thus influencing the formation of auxin gradients. Maintains the postembryonic root stem cell niche. The polypeptide is Protein GOLVEN 3 (Arabidopsis thaliana (Mouse-ear cress)).